Consider the following 216-residue polypeptide: Pyrrolidone-carboxylate peptidase (216 aa).

Catalysis depends on residues Glu80, Cys143, and His168.

The protein belongs to the peptidase C15 family. As to quaternary structure, homotetramer.

The protein resides in the cytoplasm. It carries out the reaction Release of an N-terminal pyroglutamyl group from a polypeptide, the second amino acid generally not being Pro.. Functionally, removes 5-oxoproline from various penultimate amino acid residues except L-proline. This Cupriavidus pinatubonensis (strain JMP 134 / LMG 1197) (Cupriavidus necator (strain JMP 134)) protein is Pyrrolidone-carboxylate peptidase.